Reading from the N-terminus, the 123-residue chain is Protein Rev (123 aa).

S5 is modified (phosphoserine; by host CK2). The homomultimerization stretch occupies residues 18-26; that stretch reads IIKLLYQSS. A disordered region spans residues 25–50; sequence SSPCPNPRGSRQARKNRRRRWRARQR. Residues 34 to 50 carry the Nuclear localization signal and RNA-binding (RRE) motif; that stretch reads SRQARKNRRRRWRARQR. Positions 35–49 are enriched in basic residues; that stretch reads RQARKNRRRRWRARQ. A Nuclear export signal and binding to XPO1 motif is present at residues 73-84; sequence LQLPPIERLRLD. Positions 86-123 are disordered; sequence SESCGTSGTQQPQGTETGVGGPQISVESSAVLGSGTKN. Over residues 88–101 the composition is skewed to polar residues; sequence SCGTSGTQQPQGTE. Position 92 is a phosphoserine; by host (S92).

It belongs to the HIV-1 REV protein family. As to quaternary structure, homomultimer; when bound to the RRE. Multimeric assembly is essential for activity and may involve XPO1. Binds to human KPNB1, XPO1, TNPO1, RANBP5 and IPO7. Interacts with the viral Integrase. Interacts with human KHDRBS1. Interacts with human NAP1; this interaction decreases Rev multimerization and stimulates its activity. Interacts with human DEAD-box helicases DDX3 and DDX24; these interactions may serve for viral RNA export to the cytoplasm and packaging, respectively. Interacts with human PSIP1; this interaction may inhibit HIV-1 DNA integration by promoting dissociation of the Integrase-LEDGF/p75 complex. Asymmetrically arginine dimethylated at one site by host PRMT6. Methylation impairs the RNA-binding activity and export of viral RNA from the nucleus to the cytoplasm. In terms of processing, phosphorylated by protein kinase CK2. Presence of, and maybe binding to the N-terminus of the regulatory beta subunit of CK2 is necessary for CK2-mediated Rev's phosphorylation.

Its subcellular location is the host nucleus. It localises to the host nucleolus. It is found in the host cytoplasm. Its function is as follows. Escorts unspliced or incompletely spliced viral pre-mRNAs (late transcripts) out of the nucleus of infected cells. These pre-mRNAs carry a recognition sequence called Rev responsive element (RRE) located in the env gene, that is not present in fully spliced viral mRNAs (early transcripts). This function is essential since most viral proteins are translated from unspliced or partially spliced pre-mRNAs which cannot exit the nucleus by the pathway used by fully processed cellular mRNAs. Rev itself is translated from a fully spliced mRNA that readily exits the nucleus. Rev's nuclear localization signal (NLS) binds directly to KPNB1/Importin beta-1 without previous binding to KPNA1/Importin alpha-1. KPNB1 binds to the GDP bound form of RAN (Ran-GDP) and targets Rev to the nucleus. In the nucleus, the conversion from Ran-GDP to Ran-GTP dissociates Rev from KPNB1 and allows Rev's binding to the RRE in viral pre-mRNAs. Rev multimerization on the RRE via cooperative assembly exposes its nuclear export signal (NES) to the surface. Rev can then form a complex with XPO1/CRM1 and Ran-GTP, leading to nuclear export of the complex. Conversion from Ran-GTP to Ran-GDP mediates dissociation of the Rev/RRE/XPO1/RAN complex, so that Rev can return to the nucleus for a subsequent round of export. Beside KPNB1, also seems to interact with TNPO1/Transportin-1, RANBP5/IPO5 and IPO7/RANBP7 for nuclear import. The nucleoporin-like HRB/RIP is an essential cofactor that probably indirectly interacts with Rev to release HIV RNAs from the perinuclear region to the cytoplasm. The protein is Protein Rev of Human immunodeficiency virus type 1 group M subtype A (isolate U455) (HIV-1).